A 237-amino-acid chain; its full sequence is Ribonuclease PH (237 aa).

Residues R86 and 124–126 (GTR) each bind phosphate.

It belongs to the RNase PH family. Homohexameric ring arranged as a trimer of dimers.

The enzyme catalyses tRNA(n+1) + phosphate = tRNA(n) + a ribonucleoside 5'-diphosphate. Its function is as follows. Phosphorolytic 3'-5' exoribonuclease that plays an important role in tRNA 3'-end maturation. Removes nucleotide residues following the 3'-CCA terminus of tRNAs; can also add nucleotides to the ends of RNA molecules by using nucleoside diphosphates as substrates, but this may not be physiologically important. Probably plays a role in initiation of 16S rRNA degradation (leading to ribosome degradation) during starvation. The protein is Ribonuclease PH of Shewanella piezotolerans (strain WP3 / JCM 13877).